The following is a 465-amino-acid chain: Ras-like GTPase YcjX (465 aa).

A Walker A motif motif is present at residues 26–33; it reads GLSRSGKT. The GTP site is built by S28, G31, K32, T33, A34, W95, T99, and R100. GDP contacts are provided by G31, K32, T33, A34, W95, and T99. K249 carries the post-translational modification N6-acetyllysine. K338, D340, H341, and V380 together coordinate GTP. GDP contacts are provided by K338, D340, H341, and V380.

It to H.influenzae HI_1637. In terms of assembly, monomer in solution. Mg(2+) is required as a cofactor.

It carries out the reaction GTP + H2O = GDP + phosphate + H(+). With respect to regulation, alternates between an inactive form bound to GDP and an active form bound to GTP. Likely activated by a guanine nucleotide-exchange factor (GEF). Its function is as follows. Binds GTP and GDP. Has intrinsic GTPase activity. Does not hydrolyze ATP. May act as a transducer of stress responses. The sequence is that of Ras-like GTPase YcjX (ycjX) from Escherichia coli (strain K12).